Reading from the N-terminus, the 87-residue chain is UPF0729 protein C18orf32 homolog (87 aa).

This sequence belongs to the UPF0729 family.

This is UPF0729 protein C18orf32 homolog from Esox lucius (Northern pike).